An 873-amino-acid chain; its full sequence is Leucine--tRNA ligase (873 aa).

Residues 42-52 (PYPSGKLHMGH) carry the 'HIGH' region motif. Positions 624–643 (PVEIGGTEKMSKSKNNGVDP) are disordered. Positions 632-636 (KMSKS) match the 'KMSKS' region motif. K635 provides a ligand contact to ATP.

This sequence belongs to the class-I aminoacyl-tRNA synthetase family.

The protein resides in the cytoplasm. It catalyses the reaction tRNA(Leu) + L-leucine + ATP = L-leucyl-tRNA(Leu) + AMP + diphosphate. The protein is Leucine--tRNA ligase of Pseudomonas aeruginosa (strain ATCC 15692 / DSM 22644 / CIP 104116 / JCM 14847 / LMG 12228 / 1C / PRS 101 / PAO1).